Reading from the N-terminus, the 699-residue chain is Nucleolar and coiled-body phosphoprotein 1 (699 aa).

One can recognise a LisH domain in the interval 10 to 42 (VPSDLYPLVLGFLRDNQLSEVANKFAKATGATQ). Position 33 is an N6-acetyllysine (lysine 33). Positions 65 to 637 (ERKLQANGPV…VREEEIEVDS (573 aa)) are disordered. Residues lysine 67 and lysine 76 each participate in a glycyl lysine isopeptide (Lys-Gly) (interchain with G-Cter in SUMO2) cross-link. An Acidic serine cluster 1 repeat occupies 84–95 (SSDSEDSSEEEE). The 11 X 12 AA approximate repeats of an acidic serine cluster stretch occupies residues 84-566 (SSDSEDSSEE…GKAAKNSEEE (483 aa)). Residues 86–97 (DSEDSSEEEEEV) show a composition bias toward acidic residues. Phosphoserine is present on residues serine 87, serine 90, and serine 91. Serine 91 carries the post-translational modification Diphosphoserine. Over residues 100-110 (PPAKKAAVPAK) the composition is skewed to low complexity. The Acidic serine cluster 2 repeat unit spans residues 125–136 (ESSSSEESSDDD). Residues 144–159 (QPVQKGVKPQAKAAKA) show a composition bias toward low complexity. One copy of the Acidic serine cluster 3 repeat lies at 167–178 (SDSDSDSSSEDE). Residue lysine 186 forms a Glycyl lysine isopeptide (Lys-Gly) (interchain with G-Cter in SUMO2) linkage. Position 188 is a phosphothreonine (threonine 188). Lysine 193 is covalently cross-linked (Glycyl lysine isopeptide (Lys-Gly) (interchain with G-Cter in SUMO2)). Composition is skewed to low complexity over residues 193 to 227 (KAQT…SSSS) and 236 to 261 (AATP…TTPT). The tract at residues 204–382 (RAAPKIANGK…DDEAPSKPAG (179 aa)) is interaction with RPA194. The Acidic serine cluster 4 repeat unit spans residues 221–232 (SSSSSSSDDSEE). The stretch at 264–275 (SSSSEDSSSDEE) is one Acidic serine cluster 5 repeat. Residues 291–301 (SVPPPSAPPPK) show a composition bias toward pro residues. Over residues 321-333 (SSEDSSDESDSSS) the composition is skewed to acidic residues. Residues 325-336 (SSDESDSSSEEE) form an Acidic serine cluster 6 repeat. Glycyl lysine isopeptide (Lys-Gly) (interchain with G-Cter in SUMO2) cross-links involve residues lysine 342 and lysine 347. Serine 362, serine 363, and serine 366 each carry phosphoserine. One copy of the Acidic serine cluster 7 repeat lies at 363 to 375 (SDSSDSDSSEDDE). A compositionally biased stretch (acidic residues) spans 366-375 (SDSDSSEDDE). Residues 381–397 (AGTTKNSSNKPAVTTKS) are compositionally biased toward polar residues. Residues lysine 390 and lysine 396 each participate in a glycyl lysine isopeptide (Lys-Gly) (interchain with G-Cter in SUMO2) cross-link. Position 397 is a phosphoserine (serine 397). The segment covering 398-409 (PAVKPAAAPKQP) has biased composition (low complexity). Glycyl lysine isopeptide (Lys-Gly) (interchain with G-Cter in SUMO2) cross-links involve residues lysine 401 and lysine 407. Residue lysine 415 is modified to N6-acetyllysine; alternate. Lysine 415 is covalently cross-linked (Glycyl lysine isopeptide (Lys-Gly) (interchain with G-Cter in SUMO1); alternate). Lysine 415 is covalently cross-linked (Glycyl lysine isopeptide (Lys-Gly) (interchain with G-Cter in SUMO2); alternate). The stretch at 425 to 436 (SSEEESSSSEEE) is one Acidic serine cluster 8 repeat. Glycyl lysine isopeptide (Lys-Gly) (interchain with G-Cter in SUMO2) cross-links involve residues lysine 440 and lysine 452. 2 stretches are compositionally biased toward low complexity: residues 441 to 476 (MVAT…SDSS) and 498 to 523 (AGGA…SSSD). Serine 456 carries the phosphoserine modification. One copy of the Acidic serine cluster 9 repeat lies at 470–481 (SSDSDSSSSEEE). Residue lysine 505 forms a Glycyl lysine isopeptide (Lys-Gly) (interchain with G-Cter in SUMO2) linkage. Residue serine 508 is modified to Phosphoserine. Residues 519 to 529 (SSSSDDSSEEE) form an Acidic serine cluster 10 repeat. Serine 538 is modified (phosphoserine). The segment covering 547-556 (NGTSALTAQN) has biased composition (polar residues). The Acidic serine cluster 11 repeat unit spans residues 555 to 566 (QNGKAAKNSEEE). Position 563 is a phosphoserine (serine 563). A Glycyl lysine isopeptide (Lys-Gly) (interchain with G-Cter in SUMO1) cross-link involves residue lysine 572. Lysine 579 participates in a covalent cross-link: Glycyl lysine isopeptide (Lys-Gly) (interchain with G-Cter in SUMO2). Phosphoserine is present on residues serine 580 and serine 582. A Glycyl lysine isopeptide (Lys-Gly) (interchain with G-Cter in SUMO2) cross-link involves residue lysine 604. Threonine 607 and threonine 610 each carry phosphothreonine. A Glycyl lysine isopeptide (Lys-Gly) (interchain with G-Cter in SUMO2) cross-link involves residue lysine 613. Residue serine 622 is modified to Phosphoserine. The span at 627–637 (RVREEEIEVDS) shows a compositional bias: basic and acidic residues. The residue at position 643 (serine 643) is a Phosphoserine. Lysine 647 is covalently cross-linked (Glycyl lysine isopeptide (Lys-Gly) (interchain with G-Cter in SUMO2)). Lysine 663 bears the N6-acetyllysine; alternate mark. A Glycyl lysine isopeptide (Lys-Gly) (interchain with G-Cter in SUMO2); alternate cross-link involves residue lysine 663. The residue at position 683 (arginine 683) is an Omega-N-methylarginine. Serine 686 carries the post-translational modification Phosphoserine. Lysine 695 is covalently cross-linked (Glycyl lysine isopeptide (Lys-Gly) (interchain with G-Cter in SUMO2)). Serine 698 is subject to Phosphoserine.

Belongs to the NOLC1 family. As to quaternary structure, heterodimer; heterodimerizes with TCOF1 following monoubiquitination. Interacts with RNA polymerase I 194 kDa subunit (RPA194) and with casein kinase-II. Interacts with DKC1/NAP57, NOP58 and fibrillarin. In terms of processing, undergoes rapid and massive phosphorylation/dephosphorylation cycles on CK2 and PKC sites. NOLC1 is one of the mostly phosphorylated proteins in the cell. Ubiquitinated. Monoubiquitination by the BCR(KBTBD8) complex promotes the formation of a NOLC1-TCOF1 complex that acts as a platform to connect RNA polymerase I with enzymes responsible for ribosomal processing and modification, leading to remodel the translational program of differentiating cells in favor of neural crest specification. Post-translationally, pyrophosphorylated by 5-diphosphoinositol pentakisphosphate (5-IP7). Serine pyrophosphorylation is achieved by Mg(2+)-dependent, but enzyme independent transfer of a beta-phosphate from a inositol pyrophosphate to a pre-phosphorylated serine residue.

The protein resides in the nucleus. It is found in the nucleolus. It localises to the cytoplasm. Nucleolar protein that acts as a regulator of RNA polymerase I by connecting RNA polymerase I with enzymes responsible for ribosomal processing and modification. Required for neural crest specification: following monoubiquitination by the BCR(KBTBD8) complex, associates with TCOF1 and acts as a platform to connect RNA polymerase I with enzymes responsible for ribosomal processing and modification, leading to remodel the translational program of differentiating cells in favor of neural crest specification. Involved in nucleologenesis, possibly by playing a role in the maintenance of the fundamental structure of the fibrillar center and dense fibrillar component in the nucleolus. It has intrinsic GTPase and ATPase activities. The chain is Nucleolar and coiled-body phosphoprotein 1 from Homo sapiens (Human).